The primary structure comprises 618 residues: NAD(P)H-quinone oxidoreductase subunit 5, organellar chromatophore 2 (618 aa).

The next 17 helical transmembrane spans lie at 16–36, 43–63, 99–119, 129–149, 152–172, 190–210, 220–240, 267–287, 291–311, 318–335, 348–368, 390–410, 419–438, 461–481, 495–515, 553–573, and 597–617; these read LIPI…TGWI, TPAY…SLAL, LAAL…ALGY, FFAL…SDSL, SYFL…FWYA, GDVM…GMEF, NTLT…GPIG, SVVV…LHHS, IAVL…VSIA, TLSY…IAIA, AHAI…AVSN, LIAG…CFGL, APWF…LNLT, WQMA…PWMM, AITG…GAIV, IVSG…NGFV, and SYIL…SWLV.

This sequence belongs to the complex I subunit 5 family. In terms of assembly, NDH is composed of at least 16 different subunits, 5 of which are encoded in the nucleus.

Its subcellular location is the plastid. The protein resides in the organellar chromatophore thylakoid membrane. It catalyses the reaction a plastoquinone + NADH + (n+1) H(+)(in) = a plastoquinol + NAD(+) + n H(+)(out). It carries out the reaction a plastoquinone + NADPH + (n+1) H(+)(in) = a plastoquinol + NADP(+) + n H(+)(out). In terms of biological role, NDH shuttles electrons from NAD(P)H:plastoquinone, via FMN and iron-sulfur (Fe-S) centers, to quinones in the photosynthetic chain and possibly in a chloroplast respiratory chain. The immediate electron acceptor for the enzyme in this species is believed to be plastoquinone. Couples the redox reaction to proton translocation, and thus conserves the redox energy in a proton gradient. The chain is NAD(P)H-quinone oxidoreductase subunit 5, organellar chromatophore 2 (ndhF2) from Paulinella chromatophora.